The primary structure comprises 471 residues: UDP-N-acetylmuramoylalanine--D-glutamate ligase (471 aa).

Residue 123-129 coordinates ATP; that stretch reads GTNGKST.

The protein belongs to the MurCDEF family.

It localises to the cytoplasm. It carries out the reaction UDP-N-acetyl-alpha-D-muramoyl-L-alanine + D-glutamate + ATP = UDP-N-acetyl-alpha-D-muramoyl-L-alanyl-D-glutamate + ADP + phosphate + H(+). Its pathway is cell wall biogenesis; peptidoglycan biosynthesis. Functionally, cell wall formation. Catalyzes the addition of glutamate to the nucleotide precursor UDP-N-acetylmuramoyl-L-alanine (UMA). The chain is UDP-N-acetylmuramoylalanine--D-glutamate ligase from Caulobacter vibrioides (strain ATCC 19089 / CIP 103742 / CB 15) (Caulobacter crescentus).